The chain runs to 277 residues: Large ribosomal subunit protein uL2 (277 aa).

Disordered stretches follow at residues 35–57 (RPLH…QGGG) and 222–277 (GVAM…NRRR). Composition is skewed to basic residues over residues 37 to 57 (LHSK…QGGG) and 268 to 277 (VRRRKQNRRR).

Belongs to the universal ribosomal protein uL2 family. In terms of assembly, part of the 50S ribosomal subunit. Forms a bridge to the 30S subunit in the 70S ribosome.

In terms of biological role, one of the primary rRNA binding proteins. Required for association of the 30S and 50S subunits to form the 70S ribosome, for tRNA binding and peptide bond formation. It has been suggested to have peptidyltransferase activity; this is somewhat controversial. Makes several contacts with the 16S rRNA in the 70S ribosome. The protein is Large ribosomal subunit protein uL2 of Frankia casuarinae (strain DSM 45818 / CECT 9043 / HFP020203 / CcI3).